A 330-amino-acid polypeptide reads, in one-letter code: Uroporphyrinogen decarboxylase (330 aa).

Residues 10–14 (RQAGR), Phe29, Ser59, Asp60, Tyr137, Ser192, and His307 contribute to the substrate site.

It belongs to the uroporphyrinogen decarboxylase family. As to quaternary structure, homodimer.

Its subcellular location is the plastid. It is found in the chloroplast. The enzyme catalyses uroporphyrinogen III + 4 H(+) = coproporphyrinogen III + 4 CO2. Its pathway is porphyrin-containing compound metabolism; protoporphyrin-IX biosynthesis; coproporphyrinogen-III from 5-aminolevulinate: step 4/4. Its function is as follows. Catalyzes the decarboxylation of four acetate groups of uroporphyrinogen-III to yield coproporphyrinogen-III. This is Uroporphyrinogen decarboxylase (DCUP) from Hordeum vulgare (Barley).